We begin with the raw amino-acid sequence, 179 residues long: Negative modulator of initiation of replication (179 aa).

The tract at residues 86 to 87 (AV) is interaction with DNA.

The protein belongs to the SeqA family. As to quaternary structure, homodimer. Polymerizes to form helical filaments.

The protein resides in the cytoplasm. In terms of biological role, negative regulator of replication initiation, which contributes to regulation of DNA replication and ensures that replication initiation occurs exactly once per chromosome per cell cycle. Binds to pairs of hemimethylated GATC sequences in the oriC region, thus preventing assembly of replication proteins and re-initiation at newly replicated origins. Repression is relieved when the region becomes fully methylated. The chain is Negative modulator of initiation of replication from Shewanella woodyi (strain ATCC 51908 / MS32).